The primary structure comprises 358 residues: Uroporphyrinogen decarboxylase (358 aa).

Residues 29–33, Phe-48, Asp-79, Tyr-155, Ser-210, and His-330 contribute to the substrate site; that span reads RQAGR.

This sequence belongs to the uroporphyrinogen decarboxylase family. As to quaternary structure, homodimer.

The protein resides in the cytoplasm. It catalyses the reaction uroporphyrinogen III + 4 H(+) = coproporphyrinogen III + 4 CO2. The protein operates within porphyrin-containing compound metabolism; protoporphyrin-IX biosynthesis; coproporphyrinogen-III from 5-aminolevulinate: step 4/4. Its function is as follows. Catalyzes the decarboxylation of four acetate groups of uroporphyrinogen-III to yield coproporphyrinogen-III. This Bordetella bronchiseptica (strain ATCC BAA-588 / NCTC 13252 / RB50) (Alcaligenes bronchisepticus) protein is Uroporphyrinogen decarboxylase.